We begin with the raw amino-acid sequence, 492 residues long: Glutamate--cysteine ligase A, chloroplastic (492 aa).

A disulfide bridge links Cys-156 with Cys-376.

It belongs to the carboxylate-amine ligase family. Glutamate--cysteine ligase type 2 subfamily. In terms of assembly, homodimer or monomer when oxidized or reduced, respectively. In terms of processing, the Cys-156-Cys-376 disulfide bridge is known to modulate the enzyme activity according to the redox status. The oxidized form constitutes the active enzyme.

The protein resides in the plastid. It is found in the chloroplast. The enzyme catalyses L-cysteine + L-glutamate + ATP = gamma-L-glutamyl-L-cysteine + ADP + phosphate + H(+). It functions in the pathway sulfur metabolism; glutathione biosynthesis; glutathione from L-cysteine and L-glutamate: step 1/2. The polypeptide is Glutamate--cysteine ligase A, chloroplastic (GSH1-1) (Oryza sativa subsp. indica (Rice)).